We begin with the raw amino-acid sequence, 124 residues long: Small ribosomal subunit protein uS12 (124 aa).

Residues 8-28 are disordered; the sequence is IRSAREKTDKKTKSPALKSCP. Basic and acidic residues predominate over residues 10-19; the sequence is SAREKTDKKT. Asp89 is modified (3-methylthioaspartic acid).

It belongs to the universal ribosomal protein uS12 family. As to quaternary structure, part of the 30S ribosomal subunit. Contacts proteins S8 and S17. May interact with IF1 in the 30S initiation complex.

With S4 and S5 plays an important role in translational accuracy. Functionally, interacts with and stabilizes bases of the 16S rRNA that are involved in tRNA selection in the A site and with the mRNA backbone. Located at the interface of the 30S and 50S subunits, it traverses the body of the 30S subunit contacting proteins on the other side and probably holding the rRNA structure together. The combined cluster of proteins S8, S12 and S17 appears to hold together the shoulder and platform of the 30S subunit. The protein is Small ribosomal subunit protein uS12 of Arthrospira platensis (Spirulina platensis).